The chain runs to 342 residues: MVSVTRAVFGDLPLGAGTVEKFQLQSDQLRVDIISWGCTITALEVKDRQGRASDVVLGFDELEGYLQKQPYFGAVVGRVANRIAKGTFTLDGKEYKLAINNGPNSLHGGVKGFDKVLWTPRVLSNGVEFSRVSPDGEEGYPGELKVWVMYTLDGGELVVNYRAQASQTTPVNLTNHSYFNLAGQGSPNIYDHEVTIEADAFLPVDEVLIPTGEIASVQGTAFDLRKPVELGKHLQEFHVNGFDHNFCLKGSKEKRFCARVHHAGSGRVLEVYTTQPGVQFYTGNFLDGTLKGKSGAGYPKHSGFCLETQSWPDAVNQPHFPPVLLKPGEEYDHTTWFKFSVA.

Residues 81–82 (NR) and His107 contribute to the beta-D-galactose site. Ser124 carries the phosphoserine modification. His176 serves as the catalytic Proton donor. Beta-D-galactose-binding positions include 176–178 (HSY), Asp243, Gln279, and Glu307. Glu307 (proton acceptor) is an active-site residue.

Belongs to the aldose epimerase family. As to quaternary structure, monomer.

It localises to the cytoplasm. The enzyme catalyses alpha-D-galactose = beta-D-galactose. It carries out the reaction alpha-D-glucose = beta-D-glucose. It participates in carbohydrate metabolism; hexose metabolism. The protein operates within carbohydrate metabolism; galactose metabolism. Functionally, mutarotase that catalyzes the interconversion of beta-D-galactose and alpha-D-galactose during galactose metabolism. Beta-D-galactose is metabolized in the liver into glucose 1-phosphate, the primary metabolic fuel, by the action of four enzymes that constitute the Leloir pathway: GALM, GALK1 (galactokinase), GALT (galactose-1-phosphate uridylyltransferase) and GALE (UDP-galactose-4'-epimerase). Involved in the maintenance of the equilibrium between the beta- and alpha-anomers of galactose, therefore ensuring a sufficient supply of the alpha-anomer for GALK1. Also active on D-glucose although shows a preference for galactose over glucose. The protein is Galactose mutarotase (GALM) of Bos taurus (Bovine).